The primary structure comprises 530 residues: ATP-dependent RNA helicase DBP3 (530 aa).

The segment covering 1–20 has biased composition (basic and acidic residues); the sequence is MSKDEIKDKKRKSEEYEVVD. Positions 1–77 are disordered; the sequence is MSKDEIKDKK…VASVSTSSTV (77 aa). Positions 19 to 58 form a coiled coil; that stretch reads VDKKKHKKDKKDKKEKKDKKEKKLKKDKKDKKDKKETKSE. Basic residues predominate over residues 21–50; that stretch reads KKKHKKDKKDKKEKKDKKEKKLKKDKKDKK. A compositionally biased stretch (low complexity) spans 67–77; it reads SVASVSTSSTV. Positions 117 to 143 match the Q motif motif; sequence LSFSHISLDSRIQAEISKFPKPTPIQA. The Helicase ATP-binding domain occupies 146-322; it reads WPYLLAGKDV…STFMNSPIKV (177 aa). ATP is bound at residue 159–166; sequence AETGSGKT. Residues 269 to 272 carry the DEAD box motif; it reads DEAD. In terms of domain architecture, Helicase C-terminal spans 351–500; the sequence is KLLELLKKYQ…PVPEELKKFG (150 aa).

It belongs to the DEAD box helicase family. DDX5/DBP2 subfamily.

The protein localises to the nucleus. It is found in the nucleolus. It carries out the reaction ATP + H2O = ADP + phosphate + H(+). In terms of biological role, ATP-dependent RNA helicase required for 60S ribosomal subunit synthesis. Involved in efficient pre-rRNA processing, predominantly at site A3, which is necessary for the normal formation of 25S and 5.8S rRNAs. In Vanderwaltozyma polyspora (strain ATCC 22028 / DSM 70294 / BCRC 21397 / CBS 2163 / NBRC 10782 / NRRL Y-8283 / UCD 57-17) (Kluyveromyces polysporus), this protein is ATP-dependent RNA helicase DBP3 (DBP3).